We begin with the raw amino-acid sequence, 141 residues long: Transcriptional regulator MraZ (141 aa).

SpoVT-AbrB domains are found at residues 5 to 47 and 76 to 119; these read EFEH…PAER and AAEC…GAEH.

This sequence belongs to the MraZ family. In terms of assembly, forms oligomers.

Its subcellular location is the cytoplasm. The protein localises to the nucleoid. This is Transcriptional regulator MraZ from Lactiplantibacillus plantarum (strain ATCC BAA-793 / NCIMB 8826 / WCFS1) (Lactobacillus plantarum).